A 153-amino-acid chain; its full sequence is Ribonuclease K3 (153 aa).

An N-terminal signal peptide occupies residues 1–26; that stretch reads MGPDLRCFPLLLLLLGLWWSVRPLCA. N-linked (GlcNAc...) asparagine glycosylation is present at N30. Catalysis depends on H41, which acts as the Proton acceptor. 4 disulfide bridges follow: C49-C107, C63-C117, C81-C132, and C88-C95. The N-linked (GlcNAc...) asparagine glycan is linked to N58. 64–68 contacts substrate; sequence KPQNT. An N-linked (GlcNAc...) asparagine glycan is attached at N85. Residue K89 participates in substrate binding. The active-site Proton donor is H148.

The protein belongs to the pancreatic ribonuclease family. Interacts (via N-terminus) with bacterial lipopolysaccharide (LPS). Kidney.

The protein localises to the secreted. It is found in the lysosome. The protein resides in the cytoplasmic granule. Its function is as follows. Ribonuclease which shows a preference for the pyrimidines uridine and cytosine. Has potent antibacterial activity against a range of Gram-positive and Gram-negative bacteria, including P.aeruginosa, A.baumanii, M.luteus, S.aureus, E.faecalis, E.faecium, S.saprophyticus and E.coli. Causes loss of bacterial membrane integrity, and also promotes agglutination of Gram-negative bacteria. Probably contributes to urinary tract sterility. Bactericidal activity is independent of RNase activity. This Sus scrofa (Pig) protein is Ribonuclease K3 (RNASE6).